We begin with the raw amino-acid sequence, 807 residues long: Glucocorticoid receptor (807 aa).

Disordered stretches follow at residues 1 to 47 (MDQG…LPSP), 246 to 284 (TDVN…QHQQ), and 412 to 438 (FSVS…SKPS). The interval 1 to 444 (MDQGGLKRNC…SKPSGPTHKI (444 aa)) is modulating. Positions 257-282 (LQHHQHQQQQHRHLLQHQQHQLHHQH) are enriched in basic residues. A compositionally biased stretch (low complexity) spans 412 to 421 (FSVSFSSSSP). NR C4-type zinc fingers lie at residues 445–465 (CLVC…CGSC) and 490–514 (CAGR…FRKC). The segment at residues 445-519 (CLVCSDEASG…RFRKCLQAGM (75 aa)) is a DNA-binding region (nuclear receptor). The interval 520 to 553 (NLEARKNKKLIKMKVHRPTGSAEPISNMPVPVIP) is hinge. Residues 554–788 (RMPQLVPTML…FPEMLAEIIT (235 aa)) enclose the NR LBD domain.

The protein belongs to the nuclear hormone receptor family. NR3 subfamily. In terms of assembly, heteromultimeric cytoplasmic complex with HSP90. Upon ligand binding the complex undergoes a conformation change and moves to the nucleus, where it dissociates. Binds to DNA as a homodimer, and as heterodimer with NR3C2. Interaction with numerous other transcription factors modulates transcription activation.

It is found in the cytoplasm. Its subcellular location is the nucleus. The protein localises to the mitochondrion. The protein resides in the cytoskeleton. It localises to the spindle. It is found in the microtubule organizing center. Its subcellular location is the centrosome. Functionally, receptor for glucocorticoids (GC). Has a dual mode of action: as a transcription factor that binds to glucocorticoid response elements (GRE), both for nuclear and mitochondrial DNA, and as a modulator of other transcription factors. Affects inflammatory responses, cellular proliferation and differentiation in target tissues. Involved in chromatin remodeling. Plays a role in rapid mRNA degradation by binding to the 5' UTR of target mRNAs and interacting with PNRC2 in a ligand-dependent manner which recruits the RNA helicase UPF1 and the mRNA-decapping enzyme DCP1A, leading to RNA decay. Could act as a coactivator for STAT5-dependent transcription upon growth hormone (GH) stimulation and could reveal an essential role of hepatic GR in the control of body growth. Mediates glucocorticoid-induced apoptosis. Promotes accurate chromosome segregation during mitosis. May act as a tumor suppressor. May play a negative role in adipogenesis through the regulation of lipolytic and antilipogenic gene expression. This chain is Glucocorticoid receptor (nr3c1), found in Paralichthys olivaceus (Bastard halibut).